Reading from the N-terminus, the 480-residue chain is tRNA-2-methylthio-N(6)-dimethylallyladenosine synthase (480 aa).

One can recognise an MTTase N-terminal domain in the interval 25–145 (GVFYVHTLGC…LPQLLDQARI (121 aa)). [4Fe-4S] cluster contacts are provided by Cys34, Cys74, Cys108, Cys182, Cys186, and Cys189. The Radical SAM core domain occupies 168–397 (RASKVSSWVA…VALQERITEE (230 aa)). The TRAM domain occupies 400 to 470 (KTFEGRDVEV…RHNLIADPNP (71 aa)).

It belongs to the methylthiotransferase family. MiaB subfamily. Monomer. The cofactor is [4Fe-4S] cluster.

It is found in the cytoplasm. The catalysed reaction is N(6)-dimethylallyladenosine(37) in tRNA + (sulfur carrier)-SH + AH2 + 2 S-adenosyl-L-methionine = 2-methylsulfanyl-N(6)-dimethylallyladenosine(37) in tRNA + (sulfur carrier)-H + 5'-deoxyadenosine + L-methionine + A + S-adenosyl-L-homocysteine + 2 H(+). Catalyzes the methylthiolation of N6-(dimethylallyl)adenosine (i(6)A), leading to the formation of 2-methylthio-N6-(dimethylallyl)adenosine (ms(2)i(6)A) at position 37 in tRNAs that read codons beginning with uridine. This Bifidobacterium adolescentis (strain ATCC 15703 / DSM 20083 / NCTC 11814 / E194a) protein is tRNA-2-methylthio-N(6)-dimethylallyladenosine synthase.